Consider the following 229-residue polypeptide: Heptaprenylglyceryl phosphate synthase (229 aa).

Lys-12 provides a ligand contact to sn-glycerol 1-phosphate. Residues Asp-14 and Ser-40 each contribute to the Mg(2+) site. Sn-glycerol 1-phosphate contacts are provided by residues 159–164 (YLEYSG), Gly-189, and 209–210 (GN).

Belongs to the GGGP/HepGP synthase family. Group I subfamily. In terms of assembly, homodimer. The cofactor is Mg(2+).

It catalyses the reaction sn-glycerol 1-phosphate + all-trans-heptaprenyl diphosphate = 3-heptaprenyl-sn-glycero-1-phosphate + diphosphate. It participates in membrane lipid metabolism; glycerophospholipid metabolism. Prenyltransferase that catalyzes in vivo the transfer of the heptaprenyl moiety of heptaprenyl pyrophosphate (HepPP; 35 carbon atoms) to the C3 hydroxyl of sn-glycerol-1-phosphate (G1P), producing heptaprenylglyceryl phosphate (HepGP). This reaction is an ether-bond-formation step in the biosynthesis of archaea-type G1P-based membrane lipids found in Bacillales. This chain is Heptaprenylglyceryl phosphate synthase, found in Bacillus cereus (strain B4264).